The following is a 488-amino-acid chain: MSFNHKTIEELHDLLVAKEISATELTQKTLEDIKSREEAVGSFITVSEEAALKQAAAIDAKGIDADNLMSGIPLAVKDNISTKGILTTAASKMLYNYEPIFDATSVANAYAKDMIVIGKTNMDEFAMGGSTETSYFKKTKNAWDHTKVPGGSSGGSATAVASGQVRLSLGSDTGGSIRQPAAFNGVVGLKPTYGTVSRYGLIAFGSSLDQIGPFAPTVKENAQLLNVIASSDVKDATSAPVRIADYTSKIGRDIKGMKIALPKEYLGEGIDPEIKETVLAAAKQFEALGATVEEVSLPHSKYGVAVYYIIASSEASSNLQRFDGIRYGFRADDAKNLDEIYVNTRSQGFGDEVKRRIMLGTFSLSSGYYDAYFKKAGQVRTLIIQDFDKVFADYDLILGPTTPTVAFGLDTLNHDPVAMYLADLLTIPVNLAGLPGISIPAGFVDGLPVGLQLIGPKYAEETIYQAAAAFEAVTDYHKQQPIIFGGDK.

Active-site charge relay system residues include lysine 77 and serine 152. Serine 176 functions as the Acyl-ester intermediate in the catalytic mechanism.

It belongs to the amidase family. GatA subfamily. In terms of assembly, heterotrimer of A, B and C subunits.

It catalyses the reaction L-glutamyl-tRNA(Gln) + L-glutamine + ATP + H2O = L-glutaminyl-tRNA(Gln) + L-glutamate + ADP + phosphate + H(+). Functionally, allows the formation of correctly charged Gln-tRNA(Gln) through the transamidation of misacylated Glu-tRNA(Gln) in organisms which lack glutaminyl-tRNA synthetase. The reaction takes place in the presence of glutamine and ATP through an activated gamma-phospho-Glu-tRNA(Gln). This Streptococcus pyogenes serotype M18 (strain MGAS8232) protein is Glutamyl-tRNA(Gln) amidotransferase subunit A.